The primary structure comprises 341 residues: KH domain-containing RNA-binding protein QKI (341 aa).

The interval 11–82 is qua1 domain; involved in homodimerization; it reads PKPTPDYLMQ…PDAVGPIVQL (72 aa). The 67-residue stretch at 87 to 153 folds into the KH domain; that stretch reads YVPVKEYPDF…WEHLNEDLHV (67 aa). The segment at 182-213 is qua2 domain; involved in RNA binding; that stretch reads AAEGEDSLKKMQLMELAILNGTYRDANIKSPA. Position 188 is a phosphoserine (Ser-188). At Arg-227 the chain carries Omega-N-methylarginine. Asymmetric dimethylarginine; by CARM1; alternate is present on Arg-242. Arg-242 carries the post-translational modification Omega-N-methylarginine; alternate. Arg-256 is modified (omega-N-methylarginine). An SH3-binding motif is present at residues 276 to 279; the sequence is PPGP. The Nuclear localization signal signature appears at 324 to 330; the sequence is RVHPYQR.

This sequence belongs to the quaking family. As to quaternary structure, homodimer; does not require RNA to homodimerize. Able to heterodimerize with BICC1. In terms of processing, methylated by PRMT1. Post-translationally, tyrosine phosphorylated at its C-terminus, probably by FYN. Phosphorylation leads to decreased mRNA-binding affinity, affecting transport and/or stabilization of MBP mRNA. Ubiquitinated by RNF6 in macrophages, leading to its degradation.

Its subcellular location is the nucleus. It localises to the cytoplasm. Its function is as follows. RNA reader protein, which recognizes and binds specific RNAs, thereby regulating RNA metabolic processes, such as pre-mRNA splicing, circular RNA (circRNA) formation, mRNA export, mRNA stability and/or translation. Involved in various cellular processes, such as mRNA storage into stress granules, apoptosis, lipid deposition, interferon response, glial cell fate and development. Binds to the 5'-NACUAAY-N(1,20)-UAAY-3' RNA core sequence. Acts as a mRNA modification reader that specifically recognizes and binds mRNA transcripts modified by internal N(7)-methylguanine (m7G). Promotes the formation of circular RNAs (circRNAs) during the epithelial to mesenchymal transition and in cardiomyocytes: acts by binding to sites flanking circRNA-forming exons. CircRNAs are produced by back-splicing circularization of pre-mRNAs. Plays a central role in myelinization via 3 distinct mechanisms. First, acts by protecting and promoting stability of target mRNAs such as MBP, SIRT2 and CDKN1B, which promotes oligodendrocyte differentiation. Second, participates in mRNA transport by regulating the nuclear export of MBP mRNA. Finally, indirectly regulates mRNA splicing of MAG pre-mRNA during oligodendrocyte differentiation by acting as a negative regulator of MAG exon 12 alternative splicing: acts by binding to HNRNPA1 mRNA splicing factor, preventing its translation. Involved in microglia differentiation and remyelination by regulating microexon alternative splicing of the Rho GTPase pathway. Involved in macrophage differentiation: promotes monocyte differentiation by regulating pre-mRNA splicing in naive peripheral blood monocytes. Acts as an important regulator of muscle development: required for the contractile function of cardiomyocytes by regulating alternative splicing of cardiomyocyte transcripts. Acts as a negative regulator of thermogenesis by decreasing stability, nuclear export and translation of mRNAs encoding PPARGC1A and UCP1. Also required for visceral endoderm function and blood vessel development. May also play a role in smooth muscle development. In addition to its RNA-binding activity, also acts as a nuclear transcription coactivator for SREBF2/SREBP2. This Bos taurus (Bovine) protein is KH domain-containing RNA-binding protein QKI.